Here is a 360-residue protein sequence, read N- to C-terminus: Aminomethyltransferase (360 aa).

The protein belongs to the GcvT family. In terms of assembly, the glycine cleavage system is composed of four proteins: P, T, L and H.

The enzyme catalyses N(6)-[(R)-S(8)-aminomethyldihydrolipoyl]-L-lysyl-[protein] + (6S)-5,6,7,8-tetrahydrofolate = N(6)-[(R)-dihydrolipoyl]-L-lysyl-[protein] + (6R)-5,10-methylene-5,6,7,8-tetrahydrofolate + NH4(+). Functionally, the glycine cleavage system catalyzes the degradation of glycine. This is Aminomethyltransferase from Legionella pneumophila (strain Paris).